The chain runs to 32 residues: Cytochrome c3, 10 kDa (32 aa).

Heme-binding residues include His-16, Cys-25, Cys-28, and His-29.

In terms of assembly, monomer. In terms of processing, binds 1 heme group per subunit.

The protein resides in the periplasm. Functionally, participates in sulfate respiration coupled with phosphorylation by transferring electrons from the enzyme dehydrogenase to ferredoxin. The sequence is that of Cytochrome c3, 10 kDa from Desulfuromonas acetoxidans (Chloropseudomonas ethylica).